The chain runs to 434 residues: UDP-N-acetylmuramoylalanine--D-glutamate ligase (434 aa).

117 to 123 (GTNGKST) serves as a coordination point for ATP.

Belongs to the MurCDEF family.

Its subcellular location is the cytoplasm. It carries out the reaction UDP-N-acetyl-alpha-D-muramoyl-L-alanine + D-glutamate + ATP = UDP-N-acetyl-alpha-D-muramoyl-L-alanyl-D-glutamate + ADP + phosphate + H(+). It participates in cell wall biogenesis; peptidoglycan biosynthesis. Cell wall formation. Catalyzes the addition of glutamate to the nucleotide precursor UDP-N-acetylmuramoyl-L-alanine (UMA). This is UDP-N-acetylmuramoylalanine--D-glutamate ligase from Sphingopyxis alaskensis (strain DSM 13593 / LMG 18877 / RB2256) (Sphingomonas alaskensis).